A 61-amino-acid polypeptide reads, in one-letter code: Progonadoliberin-1 (61 aa).

Glutamine 1 is subject to Pyrrolidone carboxylic acid. Glycine 10 is subject to Glycine amide.

This sequence belongs to the GnRH family.

The protein localises to the secreted. In terms of biological role, stimulates the secretion of gonadotropins; it stimulates the secretion of both luteinizing and follicle-stimulating hormones. This chain is Progonadoliberin-1 (GNRH1), found in Ovis aries (Sheep).